A 160-amino-acid chain; its full sequence is Lipoprotein signal peptidase (160 aa).

2 helical membrane passes run 63 to 83 (YRLPFFILVSVVALGVIAVTF) and 89 to 109 (DQHLAAAALALIFSGALGNLI). Active-site residues include aspartate 119 and aspartate 137. A helical transmembrane segment spans residues 132-152 (AFNVADSAICVGVALLAVDMI).

This sequence belongs to the peptidase A8 family.

It is found in the cell inner membrane. It carries out the reaction Release of signal peptides from bacterial membrane prolipoproteins. Hydrolyzes -Xaa-Yaa-Zaa-|-(S,diacylglyceryl)Cys-, in which Xaa is hydrophobic (preferably Leu), and Yaa (Ala or Ser) and Zaa (Gly or Ala) have small, neutral side chains.. It functions in the pathway protein modification; lipoprotein biosynthesis (signal peptide cleavage). Its function is as follows. This protein specifically catalyzes the removal of signal peptides from prolipoproteins. The chain is Lipoprotein signal peptidase from Geobacter sulfurreducens (strain ATCC 51573 / DSM 12127 / PCA).